Here is a 711-residue protein sequence, read N- to C-terminus: MTLVMSPDSSYGRYDAPAPADNRIMSPVHKEREPELHIEFDGTTVLCRVCGDKASGFHYGVHSCEGCKGFFRRSIQQKIQYRPCTKNQQCSILRINRNRCQYCRLKKCIAVGMSRDAVRFGRVPKREKARILAAMQSSTTRAHEQAAAAELDDGPRLLARVVRAHLDTCEFTRDRVAAMRNGARDCPTYSQPTLACPLNPAPELQSEKEFSQRFAHVIRGVIDFAGLIPGFQLLTQDDKFTLLKSGLFDALFVRLICMFDAPLNSIICLNGQLMKRDSIQSGANARFLVDSTFKFAERMNSMNLTDAEIGLFCAIVLITPDRPGLRNVELVERMHSRLKSCLQTVIAQNRSDGPGFLRELMDTLPDLRTLSTLHTEKLVVFRTEHKELLRQQMWVEDEGALWADSGADDSARSPIGSVSSSESSETTGDCGTPLLAATLAGRRRLDSRGSVDEEALGVAHLAHNGLTVTPVRPPPRYRKLDSPTDSGIESGNEKHERIVGPESGCSSPRSSLEEHSDDRRPIAPADDMPVLKRVLQAPPLYDASSLMDEAYKPHKKFRAMRRDTWSEAEARPGRPTPSPQPPHHPHPASPAHPAHSPRPIRAPLSSTHSVLAKSLMEGPRMTPEQLKRTDIIQQYMRRGETGAPTEGCPLRAGGLLTCFRGASPAPQPVIALQVDVAETDAPQPLNLSKKSPSPSPPPPPPRSYMPPMLPA.

A DNA-binding region (nuclear receptor) is located at residues 44–120 (TVLCRVCGDK…VGMSRDAVRF (77 aa)). NR C4-type zinc fingers lie at residues 47 to 67 (CRVC…CEGC) and 84 to 108 (CTKN…LKKC). The NR LBD domain occupies 153–400 (DGPRLLARVV…QQMWVEDEGA (248 aa)). 4 disordered regions span residues 405 to 432 (SGAD…DCGT), 466 to 530 (LTVT…DMPV), 559 to 602 (AMRR…PIRA), and 680 to 711 (DAPQ…MLPA). Composition is skewed to basic and acidic residues over residues 511-521 (SLEEHSDDRRP) and 560-572 (MRRD…EARP). Over residues 574–590 (RPTPSPQPPHHPHPASP) the composition is skewed to pro residues. 2 stretches are compositionally biased toward low complexity: residues 591–602 (AHPAHSPRPIRA) and 682–692 (PQPLNLSKKSP). The span at 693-711 (SPSPPPPPPRSYMPPMLPA) shows a compositional bias: pro residues.

This sequence belongs to the nuclear hormone receptor family. NR1 subfamily.

Its subcellular location is the nucleus. Orphan receptor possibly involved in the regulation of genes in the ecdysteroid cascade. The sequence is that of Ecdysone-inducible protein E75 (E75) from Galleria mellonella (Greater wax moth).